Here is a 416-residue protein sequence, read N- to C-terminus: Putative competence-damage inducible protein (416 aa).

Belongs to the CinA family.

The polypeptide is Putative competence-damage inducible protein (Bacillus velezensis (strain DSM 23117 / BGSC 10A6 / LMG 26770 / FZB42) (Bacillus amyloliquefaciens subsp. plantarum)).